The sequence spans 464 residues: Dihydrolipoyl dehydrogenase (464 aa).

FAD contacts are provided by residues 36–44 (EGAALGGTC), Lys53, and Ala119. Cys44 and Cys49 are joined by a disulfide. Residues 184 to 188 (GGGYI), Glu207, and 269 to 272 (AVGR) each bind NAD(+). Asp311 and Ala319 together coordinate FAD. His443 serves as the catalytic Proton acceptor.

It belongs to the class-I pyridine nucleotide-disulfide oxidoreductase family. Homodimer. FAD is required as a cofactor.

Its subcellular location is the cytoplasm. It carries out the reaction N(6)-[(R)-dihydrolipoyl]-L-lysyl-[protein] + NAD(+) = N(6)-[(R)-lipoyl]-L-lysyl-[protein] + NADH + H(+). In terms of biological role, the branched-chain alpha-keto dehydrogenase complex catalyzes the overall conversion of alpha-keto acids to acyl-CoA and CO(2). It contains multiple copies of 3 enzymatic components: branched-chain alpha-keto acid decarboxylase (E1), lipoamide acyltransferase (E2) and lipoamide dehydrogenase (E3). The chain is Dihydrolipoyl dehydrogenase from Pseudomonas aeruginosa (strain ATCC 15692 / DSM 22644 / CIP 104116 / JCM 14847 / LMG 12228 / 1C / PRS 101 / PAO1).